Here is a 497-residue protein sequence, read N- to C-terminus: Tripartite motif-containing protein 5 (497 aa).

Position 2 is an N-acetylalanine (Ala2). The RING-type zinc finger occupies 15 to 60 (CPICLELLTEPLSLHCGHSFCQACITANHKKSMLYKEGERSCPVCR). Position 87 is a phosphoserine (Ser87). A B box-type zinc finger spans residues 92-133 (QKVDHCARHGEKLLLFCQEDSKVICWLCERSQEHRGHHTFLM). Residues Cys97, His100, Cys119, and His125 each contribute to the Zn(2+) site. Residues 137–225 (AQEYHVKLQT…LTKSETEMVQ (89 aa)) are a coiled coil. The segment at 187–200 (FEQLREILDWEESN) is required for interaction with GABARAP and for autophagy. Residues 283 to 497 (LKGMLDMFRE…VPMTLCSPSS (215 aa)) enclose the B30.2/SPRY domain.

The protein belongs to the TRIM/RBCC family. Can form homodimers and homotrimers. In addition to lower-order dimerization, also exhibits a higher-order multimerization and both low- and high-order multimerizations are essential for its restriction activity. Interacts with MAP3K7/TAK1, TAB2 and TAB3. Interacts with HSPA8/HSC70, PSMC2, PSMC4, PSMC5 and PSMD7. Interacts with SQSTM1. Interacts (via B30.2/SPRY domain) with HSPA1A/B. Interacts with TRIM6 and TRIM34. Interacts with BECN1; GABARAP. Interacts with ULK1 (phosphorylated form), GABARAPL1, GABARAPL2, MAP1LC3A and MAP1LC3C. In terms of processing, degraded in a proteasome-independent fashion in the absence of viral infection but in a proteasome-dependent fashion following exposure to restriction sensitive virus. Post-translationally, autoubiquitinated in a RING finger- and UBE2D2-dependent manner. Monoubiquitinated by TRIM21. Deubiquitinated by Yersinia YopJ. Ubiquitination may not lead to proteasomal degradation.

The protein resides in the cytoplasm. It is found in the nucleus. It carries out the reaction S-ubiquitinyl-[E2 ubiquitin-conjugating enzyme]-L-cysteine + [acceptor protein]-L-lysine = [E2 ubiquitin-conjugating enzyme]-L-cysteine + N(6)-ubiquitinyl-[acceptor protein]-L-lysine.. Its pathway is protein modification; protein ubiquitination. In terms of biological role, capsid-specific restriction factor that prevents infection from non-host-adapted retroviruses. Blocks viral replication early in the life cycle, after viral entry but before reverse transcription. In addition to acting as a capsid-specific restriction factor, also acts as a pattern recognition receptor that activates innate immune signaling in response to the retroviral capsid lattice. Binding to the viral capsid triggers its E3 ubiquitin ligase activity, and in concert with the heterodimeric ubiquitin conjugating enzyme complex UBE2V1-UBE2N (also known as UBC13-UEV1A complex) generates 'Lys-63'-linked polyubiquitin chains, which in turn are catalysts in the autophosphorylation of the MAP3K7/TAK1 complex (includes TAK1, TAB2, and TAB3). Activation of the MAP3K7/TAK1 complex by autophosphorylation results in the induction and expression of NF-kappa-B and MAPK-responsive inflammatory genes, thereby leading to an innate immune response in the infected cell. Restricts infection by human immunodeficiency virus type 1 (HIV-1) and simian immunodeficiency virus (SIV-agm). Plays a role in regulating autophagy through activation of autophagy regulator BECN1 by causing its dissociation from its inhibitors BCL2 and TAB2. Also plays a role in autophagy by acting as a selective autophagy receptor which recognizes and targets HIV-1 capsid protein p24 for autophagic destruction. This chain is Tripartite motif-containing protein 5 (TRIM5), found in Macaca mulatta (Rhesus macaque).